The following is a 229-amino-acid chain: Urease accessory protein UreF (229 aa).

It belongs to the UreF family. UreD, UreF and UreG form a complex that acts as a GTP-hydrolysis-dependent molecular chaperone, activating the urease apoprotein by helping to assemble the nickel containing metallocenter of UreC. The UreE protein probably delivers the nickel.

It localises to the cytoplasm. In terms of biological role, required for maturation of urease via the functional incorporation of the urease nickel metallocenter. This is Urease accessory protein UreF from Alcanivorax borkumensis (strain ATCC 700651 / DSM 11573 / NCIMB 13689 / SK2).